A 450-amino-acid chain; its full sequence is UDP-N-acetylmuramoylalanine--D-glutamate ligase (450 aa).

ATP is bound at residue 115-121 (GTNGKST).

This sequence belongs to the MurCDEF family.

It is found in the cytoplasm. It catalyses the reaction UDP-N-acetyl-alpha-D-muramoyl-L-alanine + D-glutamate + ATP = UDP-N-acetyl-alpha-D-muramoyl-L-alanyl-D-glutamate + ADP + phosphate + H(+). Its pathway is cell wall biogenesis; peptidoglycan biosynthesis. Functionally, cell wall formation. Catalyzes the addition of glutamate to the nucleotide precursor UDP-N-acetylmuramoyl-L-alanine (UMA). This Syntrophotalea carbinolica (strain DSM 2380 / NBRC 103641 / GraBd1) (Pelobacter carbinolicus) protein is UDP-N-acetylmuramoylalanine--D-glutamate ligase.